The primary structure comprises 341 residues: Guanine nucleotide-binding protein subunit beta (341 aa).

7 WD repeats span residues 54–84, 96–126, 142–171, 183–213, 225–255, 269–299, and 311–341; these read GHLAKIYAMHWASDSRNLVSASQDGKLIVWD, LRSSWVMTCAYAPSGNYVACGGLDNICSIYS, GHTGYLSCCRFIDDNQIVTSSGDMTCALWN, GHTGDVMSLSLAPDMRTFVSGACDASAKLFD, GHESDINAITYFPNGFAFATGSDDATCRLFD, NIICGITSVAFSKSGRLLLGGYDDFNCNVWD, and GHDNRVSCLGVTEDGMAVATGSWDSFLKIWN.

The protein belongs to the WD repeat G protein beta family. G proteins are composed of 3 units, alpha, beta and gamma.

Guanine nucleotide-binding proteins (G proteins) are involved as a modulator or transducer in various transmembrane signaling systems. The beta and gamma chains are required for the GTPase activity, for replacement of GDP by GTP, and for G protein-effector interaction. This is Guanine nucleotide-binding protein subunit beta from Loligo forbesii (Veined squid).